The following is a 502-amino-acid chain: Actin-binding protein WASF3 (502 aa).

The stretch at 57–93 forms a coiled coil; sequence NEANNFYIRANSLQDRIDRLAVKVTQLDSTVEEVSLQ. At Tyr151 the chain carries Phosphotyrosine; by ABL1. Residues 162–206 adopt a coiled-coil conformation; sequence KEKMLQDTEDKRKEKRRQKEQKRIDGTTREVKKVRKARNRRQEWN. Disordered stretches follow at residues 169 to 210 and 223 to 443; these read TEDK…MMAY and SVYH…ARSD. Basic and acidic residues predominate over residues 182 to 192; that stretch reads QKRIDGTTREV. Positions 223–237 are enriched in polar residues; it reads SVYHGASSEGSLSPD. Tyr248 is modified (phosphotyrosine; by ABL1). Pro residues predominate over residues 302–312; that stretch reads QQPPPPPPPQA. A Phosphotyrosine; by ABL1 modification is found at Tyr337. Pro residues-rich tracts occupy residues 341-352 and 394-410; these read SGPPPPPPPPVI and APPP…PPGP. Residues 411–423 show a composition bias toward low complexity; that stretch reads GSSLSSSPMHGPP. The 18-residue stretch at 440 to 457 folds into the WH2 domain; it reads ARSDLLAAIRMGIQLKKV. Tyr486 is modified (phosphotyrosine; by ABL1).

Belongs to the SCAR/WAVE family. Binds actin and the Arp2/3 complex. In terms of processing, phosphorylation by ABL1 promotes lamellipodia formation and cell migration. Expressed in ovary and brain.

It localises to the cytoplasm. The protein resides in the cytoskeleton. Downstream effector molecules involved in the transmission of signals from tyrosine kinase receptors and small GTPases to the actin cytoskeleton. Plays a role in the regulation of cell morphology and cytoskeletal organization. Required in the control of cell shape. The chain is Actin-binding protein WASF3 (WASF3) from Homo sapiens (Human).